Consider the following 475-residue polypeptide: Bifunctional aspartate aminotransferase and glutamate/aspartate-prephenate aminotransferase (475 aa).

The N-terminal 55 residues, 1-55, are a transit peptide targeting the chloroplast; that stretch reads MASQSSVAVISSAAARGESFPDSKKPIGSVRFQQPLRLSFSYCKSGNMSSRICAM. Positions 107, 193, and 243 each coordinate L-aspartate. An N6-(pyridoxal phosphate)lysine modification is found at K306. Residue R445 participates in L-aspartate binding.

It belongs to the class-I pyridoxal-phosphate-dependent aminotransferase family. In terms of assembly, homodimer. Requires pyridoxal 5'-phosphate as cofactor.

It localises to the plastid. Its subcellular location is the chloroplast. The catalysed reaction is L-aspartate + 2-oxoglutarate = oxaloacetate + L-glutamate. The enzyme catalyses L-arogenate + oxaloacetate = prephenate + L-aspartate. It carries out the reaction L-arogenate + 2-oxoglutarate = prephenate + L-glutamate. It participates in amino-acid biosynthesis; L-phenylalanine biosynthesis; L-arogenate from prephenate (L-Asp route): step 1/1. Its pathway is amino-acid biosynthesis; L-phenylalanine biosynthesis; L-arogenate from prephenate (L-Glu route): step 1/1. Prokaryotic-type aspartate aminotransferase. Also has a prenate transaminase activity. Involved in the aromatic amino acids biosynthesis pathway via the arogenate route. Required for the transamination of prephenate into arogenate. Required for early development of the embryo. The protein is Bifunctional aspartate aminotransferase and glutamate/aspartate-prephenate aminotransferase (PAT) of Arabidopsis thaliana (Mouse-ear cress).